The chain runs to 649 residues: Leucine-rich repeat transmembrane protein FLRT3 (649 aa).

Residues 1 to 28 (MISPAWSLFLIGTKIGLFFQVAPLSVMA) form the signal peptide. The LRRNT domain occupies 29 to 58 (KSCPSVCRCDAGFIYCNDRSLTSIPVGIPE). Residues 29–528 (KSCPSVCRCD…KEPYKNPNLP (500 aa)) are Extracellular-facing. Intrachain disulfides connect Cys31–Cys37 and Cys35–Cys44. The tract at residues 38–67 (DAGFIYCNDRSLTSIPVGIPEDATTLYLQN) is interaction with ADGRL3. LRR repeat units follow at residues 59-80 (DATT…SDLK), 84-104 (KVQR…NLPK), 105-126 (YVKE…SLSK), 129-150 (YLEE…EGAF), 155-176 (YLRL…LPRT), 177-197 (IEEL…SLHG), 200-220 (SLKR…GDKV), 226-247 (NLTE…LPGT), 248-269 (SLRK…AFSY), and 272-293 (QLYR…IFDD). An N-linked (GlcNAc...) asparagine glycan is attached at Asn226. Asn282 and Asn296 each carry an N-linked (GlcNAc...) asparagine glycan. The LRRCT domain occupies 305-357 (NPWYCGCKMKWVRDWLQSLPVKVNVRGLMCQAPEKVRGMAIKDLSAELFDCKD). An intrachain disulfide couples Cys309 to Cys334. The disordered stretch occupies residues 378–405 (QGQWPAPVTKQPDIKNPKLTKDQRTTGS). Positions 389–401 (PDIKNPKLTKDQR) are enriched in basic and acidic residues. The region spanning 405–504 (SPSRKTILIT…VCIETQTAPL (100 aa)) is the Fibronectin type-III domain. Residues 529-549 (LAAIIGGAVALVSIALLALVC) form a helical membrane-spanning segment. The Cytoplasmic segment spans residues 550-649 (WYVHRNGSLF…GIPDLDHSHS (100 aa)). A disordered region spans residues 629 to 649 (ESSSNRSYRDSGIPDLDHSHS).

Monomer and homodimer. Self-associates (via leucine-rich repeats), giving rise to homooligomers. Interacts with FGFR1. Interacts (via extracellular domain) with ADGRL1/LPHN1 and ADGRL3 (via olfactomedin-like domain). Interacts (via extracellular domain) with LPHN2 (via olfactomedin-like domain). Interacts (via extracellular domain) with UNC5B (via Ig domain). May also interact (via extracellular domain) with UNC5A and UNC5C. Interacts (via extracellular domain) with UNC5D (via extracellular domain). Identified in complexes composed of FLRT3, ADGRL3 and UNC5B, respectively FLRT3, ADGRL3 and UNC5D. Interacts (via cytoplasmic domain) with ROBO1. Post-translationally, N-glycosylated. In terms of processing, proteolytic cleavage in the juxtamembrane region gives rise to a soluble ectodomain. Cleavage is probably effected by a metalloprotease. As to expression, detected in brain (at protein level). Detected in brain neurons, especially in basal ganglia, hippocampus dentate gyrus and CA3 region, cerebellum and in olfactory bulb.

It localises to the cell membrane. Its subcellular location is the presynaptic cell membrane. It is found in the synapse. The protein resides in the synaptosome. The protein localises to the postsynaptic density. It localises to the cell projection. Its subcellular location is the dendrite. It is found in the axon. The protein resides in the growth cone membrane. The protein localises to the cytoplasmic vesicle. It localises to the endoplasmic reticulum membrane. Its subcellular location is the cell junction. It is found in the focal adhesion. The protein resides in the secreted. Functionally, functions in cell-cell adhesion, cell migration and axon guidance, exerting an attractive or repulsive role depending on its interaction partners. Plays a role in the spatial organization of brain neurons. Plays a role in vascular development in the retina. Plays a role in cell-cell adhesion via its interaction with ADGRL3 and probably also other latrophilins that are expressed at the surface of adjacent cells. Interaction with the intracellular domain of ROBO1 mediates axon attraction towards cells expressing NTN1. Mediates axon growth cone collapse and plays a repulsive role in neuron guidance via its interaction with UNC5B, and possibly also other UNC-5 family members. Promotes neurite outgrowth (in vitro). Mediates cell-cell contacts that promote an increase both in neurite number and in neurite length. Plays a role in the regulation of the density of glutamaergic synapses. Plays a role in fibroblast growth factor-mediated signaling cascades. Required for normal morphogenesis during embryonic development, but not for normal embryonic patterning. Required for normal ventral closure, headfold fusion and definitive endoderm migration during embryonic development. Required for the formation of a normal basement membrane and the maintenance of a normal anterior visceral endoderm during embryonic development. The sequence is that of Leucine-rich repeat transmembrane protein FLRT3 (Flrt3) from Rattus norvegicus (Rat).